Here is a 451-residue protein sequence, read N- to C-terminus: Cobyrinate a,c-diamide synthase (451 aa).

The 192-residue stretch at 246–437 (KIGVAYDEVF…VHTHVAAMPN (192 aa)) folds into the GATase cobBQ-type domain. Cys-328 (nucleophile) is an active-site residue.

This sequence belongs to the CobB/CbiA family. Mg(2+) is required as a cofactor.

The catalysed reaction is cob(II)yrinate + 2 L-glutamine + 2 ATP + 2 H2O = cob(II)yrinate a,c diamide + 2 L-glutamate + 2 ADP + 2 phosphate + 2 H(+). It catalyses the reaction Ni-sirohydrochlorin + 2 L-glutamine + 2 ATP + 2 H2O = Ni-sirohydrochlorin a,c-diamide + 2 L-glutamate + 2 ADP + 2 phosphate + 2 H(+). It functions in the pathway cofactor biosynthesis; adenosylcobalamin biosynthesis; cob(II)yrinate a,c-diamide from sirohydrochlorin (anaerobic route): step 10/10. Its function is as follows. Catalyzes the ATP-dependent amidation of the two carboxylate groups at positions a and c of cobyrinate, using either L-glutamine or ammonia as the nitrogen source. Involved in the biosynthesis of the unique nickel-containing tetrapyrrole coenzyme F430, the prosthetic group of methyl-coenzyme M reductase (MCR), which plays a key role in methanogenesis and anaerobic methane oxidation. Catalyzes the ATP-dependent amidation of the two carboxylate groups at positions a and c of Ni-sirohydrochlorin, using L-glutamine or ammonia as the nitrogen source. The protein is Cobyrinate a,c-diamide synthase of Methanobrevibacter smithii (strain ATCC 35061 / DSM 861 / OCM 144 / PS).